The sequence spans 259 residues: Probable metal transport system ATP-binding protein CPn_0348/CP_0412/CPj0348/CpB0355 (259 aa).

In terms of domain architecture, ABC transporter spans 3 to 241 (VKDETFWSVH…TIFQTYGCEI (239 aa)). 41–48 (GPNGAGKS) is an ATP binding site.

Belongs to the ABC transporter superfamily.

The protein resides in the cell inner membrane. In terms of biological role, part of an ATP-driven transport system CPn0346/CPn0347/CPn0348/CPn0349 for a metal. Probably responsible for energy coupling to the transport system. In Chlamydia pneumoniae (Chlamydophila pneumoniae), this protein is Probable metal transport system ATP-binding protein CPn_0348/CP_0412/CPj0348/CpB0355.